A 262-amino-acid chain; its full sequence is uncharacterized protein (262 aa).

The signal sequence occupies residues 1–22; the sequence is MGYLKRFALYISVMILIFAIAG. Cys23 is lipidated: N-palmitoyl cysteine. Cys23 carries S-diacylglycerol cysteine lipidation.

Belongs to the staphylococcal tandem lipoprotein family.

It is found in the cell membrane. This is an uncharacterized protein from Staphylococcus aureus (strain NCTC 8325 / PS 47).